The following is a 558-amino-acid chain: N-terminal histidine N-methyltransferase (558 aa).

Topologically, residues 1-15 (MAPFRSIYEKDATKK) are cytoplasmic. Residues 16–32 (LVVGAALLVLAAFYSYV) traverse the membrane as a helical segment. The Lumenal portion of the chain corresponds to 33-49 (FLLTLAPVYGSTPSHIF). The helical transmembrane segment at 50 to 65 (HGYGVGIAGVAGWFSK) threads the bilayer. Topologically, residues 66 to 77 (DIVDRVSGRKAI) are cytoplasmic. The helical transmembrane segment at 78–96 (YAIPVLAFFLPVVQYFVSQ) threads the bilayer. Residues 97–104 (QSSALGNP) are Lumenal-facing. The helical transmembrane segment at 105 to 131 (AGPIFTEVLALYPLVLLSVACAGKLVQ) threads the bilayer. Topologically, residues 132–145 (AGLNLQRHGDLVAE) are cytoplasmic. A helical transmembrane segment spans residues 146 to 169 (HIPLLGSYVIYSAGEHLIKAFLSR). Residues 170–172 (FIG) are Lumenal-facing. The chain crosses the membrane as a helical span at residues 173-194 (STVLLSRAGLQILIAIFYAAAV). The Cytoplasmic segment spans residues 195 to 197 (PSK). The chain crosses the membrane as a helical span at residues 198–215 (ALLLAIPAFLFSVTSNTH). Topologically, residues 216–558 (LPLGHTTTAL…VLPDRVWEGW (343 aa)) are lumenal.

It belongs to the methyltransferase superfamily.

It localises to the endoplasmic reticulum membrane. The catalysed reaction is L-histidyl-[protein] + S-adenosyl-L-methionine = N(tele)-methyl-L-histidyl-[protein] + S-adenosyl-L-homocysteine + H(+). Protein-histidine N-methyltransferase that specifically mediates 3-methylhistidine (tele-methylhistidine) methylation at 'His-1', which protects the side-chain from oxidative damage. Methylates lytic polysaccharide monooxygenases (LPMOs) destined for secretion, including AN4702. The sequence is that of N-terminal histidine N-methyltransferase from Emericella nidulans (strain FGSC A4 / ATCC 38163 / CBS 112.46 / NRRL 194 / M139) (Aspergillus nidulans).